Reading from the N-terminus, the 389-residue chain is Large envelope protein (389 aa).

Residue Met1 is modified to N-acetylmethionine. A lipid anchor (N-myristoyl glycine; by host) is attached at Gly2. The segment at 2 to 108 is pre-S1; that stretch reads GTNLSVPNPL…PPLRDTHPQA (107 aa). The interval 2 to 163 is pre-S; it reads GTNLSVPNPL…LSKTGDPVPN (162 aa). Topologically, residues 2-170 are virion surface; in external conformation; the sequence is GTNLSVPNPL…VPNMENIASG (169 aa). The Intravirion; in internal conformation segment spans residues 2–242; that stretch reads GTNLSVPNPL…PGYRWMCLRR (241 aa). The tract at residues 74–103 is disordered; that stretch reads LTTVPAAPPPASTNRQSGRQPTPLSPPLRD. A compositionally biased stretch (polar residues) spans 85-95; sequence STNRQSGRQPT. Positions 109-163 are pre-S2; it reads MQWNSTTFHQTLQDPGVRALYFPAGGSSSGTVSPAQNTVSAISSILSKTGDPVPN. The helical transmembrane segment at 171-191 threads the bilayer; that stretch reads LLGPLLVLQAGFFLLTKILTI. Over 192–242 the chain is Intravirion; in external conformation; sequence PQSLDSWWTSLNFLGGTPVCLGQNSQSQISSHSPTCCPPICPGYRWMCLRR. Residues 243 to 263 form a helical membrane-spanning segment; sequence FIIFLCILLLCLIFLLVLLDY. Topologically, residues 264–337 are virion surface; it reads QGMLPVCPLI…WASVRFSWLS (74 aa). The N-linked (GlcNAc...) asparagine; by host glycan is linked to Asn309. The chain crosses the membrane as a helical span at residues 338–358; the sequence is LLVPFVQWFVGLSPTVWLSVI. Residues 359-364 are Intravirion-facing; it reads WMIWFW. Residues 365–387 form a helical membrane-spanning segment; it reads GPSLYNILSPFMPLLPIFFCLWV. At 388–389 the chain is on the virion surface side; that stretch reads YI.

Belongs to the orthohepadnavirus major surface antigen family. As to quaternary structure, interacts (via its myristoylated pre-S1 region) with the host SLC10A1/NTCP; this interaction is essential for viral entry. In its internal form (Li-HBsAg), interacts with the capsid protein and with the isoform S. Interacts with host chaperone CANX. In terms of assembly, associates with host chaperone CANX through its pre-S2 N glycan; this association may be essential for isoform M proper secretion. As to quaternary structure, interacts with isoform L. Interacts with the antigens of satellite virus HDV (HDVAgs); this interaction is required for encapsidation of HDV genomic RNA. Post-translationally, isoform M is N-terminally acetylated by host at a ratio of 90%, and N-glycosylated by host at the pre-S2 region. Myristoylated; this modification is essential for its interaction with the host protein SLC10A1/NTCP.

It localises to the virion membrane. Functionally, the large envelope protein exists in two topological conformations, one which is termed 'external' or Le-HBsAg and the other 'internal' or Li-HBsAg. In its external conformation the protein attaches the virus to cell receptors and thereby initiating infection. This interaction determines the species specificity and liver tropism. This attachment induces virion internalization predominantly through caveolin-mediated endocytosis. The large envelope protein also assures fusion between virion membrane and endosomal membrane. In its internal conformation the protein plays a role in virion morphogenesis and mediates the contact with the nucleocapsid like a matrix protein. In terms of biological role, the middle envelope protein plays an important role in the budding of the virion. It is involved in the induction of budding in a nucleocapsid independent way. In this process the majority of envelope proteins bud to form subviral lipoprotein particles of 22 nm of diameter that do not contain a nucleocapsid. The protein is Large envelope protein of Hepatitis B virus genotype B/C subtype adw (isolate Okinawa/pODW282/1998) (HBV-B).